The chain runs to 635 residues: Very-long-chain aldehyde decarbonylase GL1-6 (635 aa).

Helical transmembrane passes span 46–66 (LLNFMVFPMLLLRLLYGQLWI), 100–120 (IILTALVFYLVSATMPQAQVA), 127–147 (GMVVTAVLHAGPVEFLYYWLH), and 183–203 (VVYFVLLAIPILSTVATGTVS). Residues 139-273 (VEFLYYWLHR…MPVYDYIYGT (135 aa)) form the Fatty acid hydroxylase domain.

The protein belongs to the sterol desaturase family. Homodimer. As to expression, expressed in germinating seeds and shoots.

It localises to the endoplasmic reticulum membrane. It catalyses the reaction a long-chain fatty aldehyde + 2 NADPH + O2 + H(+) = a long-chain alkane + formate + 2 NADP(+) + H2O. Functionally, aldehyde decarbonylase involved in the conversion of aldehydes to alkanes. Core component of a very-long-chain alkane synthesis complex. The protein is Very-long-chain aldehyde decarbonylase GL1-6 of Oryza sativa subsp. japonica (Rice).